A 284-amino-acid chain; its full sequence is NAD kinase (284 aa).

Residue Asp60 is the Proton acceptor of the active site. Residues Asp60–Gly61, Asn134–Glu135, Arg145, Lys162, Asp164, Thr175–Ser180, and Gln234 contribute to the NAD(+) site.

This sequence belongs to the NAD kinase family. It depends on a divalent metal cation as a cofactor.

It is found in the cytoplasm. It carries out the reaction NAD(+) + ATP = ADP + NADP(+) + H(+). Its function is as follows. Involved in the regulation of the intracellular balance of NAD and NADP, and is a key enzyme in the biosynthesis of NADP. Catalyzes specifically the phosphorylation on 2'-hydroxyl of the adenosine moiety of NAD to yield NADP. The chain is NAD kinase from Clostridium botulinum (strain Eklund 17B / Type B).